We begin with the raw amino-acid sequence, 223 residues long: Deoxyribose-phosphate aldolase 2 (223 aa).

Asp92 serves as the catalytic Proton donor/acceptor. The active-site Schiff-base intermediate with acetaldehyde is Lys154. The active-site Proton donor/acceptor is the Lys183.

This sequence belongs to the DeoC/FbaB aldolase family. DeoC type 1 subfamily.

It localises to the cytoplasm. The catalysed reaction is 2-deoxy-D-ribose 5-phosphate = D-glyceraldehyde 3-phosphate + acetaldehyde. Its pathway is carbohydrate degradation; 2-deoxy-D-ribose 1-phosphate degradation; D-glyceraldehyde 3-phosphate and acetaldehyde from 2-deoxy-alpha-D-ribose 1-phosphate: step 2/2. In terms of biological role, catalyzes a reversible aldol reaction between acetaldehyde and D-glyceraldehyde 3-phosphate to generate 2-deoxy-D-ribose 5-phosphate. This is Deoxyribose-phosphate aldolase 2 from Oceanobacillus iheyensis (strain DSM 14371 / CIP 107618 / JCM 11309 / KCTC 3954 / HTE831).